We begin with the raw amino-acid sequence, 456 residues long: Dual-specificity RNA methyltransferase RlmN (456 aa).

Positions 1–21 (MIQRHLGQPRLIQNGGDAGGV) are disordered. Residue E175 is the Proton acceptor of the active site. The region spanning 183–416 (DEERGAVCIS…QDAGYSAPIR (234 aa)) is the Radical SAM core domain. C190 and C427 form a disulfide bridge. 3 residues coordinate [4Fe-4S] cluster: C197, C201, and C204. S-adenosyl-L-methionine contacts are provided by residues 253–254 (GE), S285, 307–309 (SLH), and N384. C427 serves as the catalytic S-methylcysteine intermediate.

The protein belongs to the radical SAM superfamily. RlmN family. The cofactor is [4Fe-4S] cluster.

Its subcellular location is the cytoplasm. It carries out the reaction adenosine(2503) in 23S rRNA + 2 reduced [2Fe-2S]-[ferredoxin] + 2 S-adenosyl-L-methionine = 2-methyladenosine(2503) in 23S rRNA + 5'-deoxyadenosine + L-methionine + 2 oxidized [2Fe-2S]-[ferredoxin] + S-adenosyl-L-homocysteine. It catalyses the reaction adenosine(37) in tRNA + 2 reduced [2Fe-2S]-[ferredoxin] + 2 S-adenosyl-L-methionine = 2-methyladenosine(37) in tRNA + 5'-deoxyadenosine + L-methionine + 2 oxidized [2Fe-2S]-[ferredoxin] + S-adenosyl-L-homocysteine. Functionally, specifically methylates position 2 of adenine 2503 in 23S rRNA and position 2 of adenine 37 in tRNAs. m2A2503 modification seems to play a crucial role in the proofreading step occurring at the peptidyl transferase center and thus would serve to optimize ribosomal fidelity. The chain is Dual-specificity RNA methyltransferase RlmN from Paramagnetospirillum magneticum (strain ATCC 700264 / AMB-1) (Magnetospirillum magneticum).